Consider the following 683-residue polypeptide: MIKRQKDRKFELVSKFKPAGDQQQAINKLTAGFEKGYKEQILEGATGTGKTFTMANIIAKLNKPTLVITHNKTLVGQLYGEFKGFFPNNAVEYFVSYYDYYQPEAYVPQSDTYIEKDSAINDEIDQLRHATTSALMERNDVIVVASVSCIYGLGDPKEYARSVLMIHEGQEYERNTLLRDLVNLQYDRNDIDFQRGRFRVRGDVVEIFPAGNSNHAYRVEFFGDEIDRIVEIDSLTGEVIGERESISLFPATHFMTNDEQLRRALKAISKEMKVQVKKFEGEGKLLEAERIKQRTTYDMEMMGEVGYTNGIENYSRHMEGRKVGEPPYTLLDFFPDDFLILIDESHATMPEIRAMYNGDRNRKKTLIDYGFRLPSALDNRPLKLAEFEKHVNQILYVSATPGDYELERTDHKVEQIIRPTGLLDPKIEVRPIEGQIDDLVGEINKRIDRNERVFVTTLTKKMAEDLTDYLKDLGIKVRYLHSDIKTLERMQILRDLRLGKFDVLIGINLLREGIDVPEVSLVAILDADKEGFLRAYRPLVQTMGRAARNANGEVIMYADTITDSMKAAIEATQRRRKLQEEFNKEHGIVPKTIIKPVHDVISITKPSEDSKKEKTDSFADLNFDELTAKQKKTMIKNLQEQMKEAAKKLDFEEAANLRDAIMELQSSSRRPKTRKGKALNGKR.

The Helicase ATP-binding domain maps to 31 to 414 (AGFEKGYKEQ…ELERTDHKVE (384 aa)). Residue 44-51 (GATGTGKT) coordinates ATP. A Beta-hairpin motif is present at residues 97-120 (YYDYYQPEAYVPQSDTYIEKDSAI). A Helicase C-terminal domain is found at 435 to 601 (QIDDLVGEIN…TIIKPVHDVI (167 aa)). The UVR domain occupies 632–667 (KTMIKNLQEQMKEAAKKLDFEEAANLRDAIMELQSS). The disordered stretch occupies residues 662-683 (MELQSSSRRPKTRKGKALNGKR). The segment covering 669–683 (RRPKTRKGKALNGKR) has biased composition (basic residues).

The protein belongs to the UvrB family. As to quaternary structure, forms a heterotetramer with UvrA during the search for lesions. Interacts with UvrC in an incision complex.

The protein localises to the cytoplasm. In terms of biological role, the UvrABC repair system catalyzes the recognition and processing of DNA lesions. A damage recognition complex composed of 2 UvrA and 2 UvrB subunits scans DNA for abnormalities. Upon binding of the UvrA(2)B(2) complex to a putative damaged site, the DNA wraps around one UvrB monomer. DNA wrap is dependent on ATP binding by UvrB and probably causes local melting of the DNA helix, facilitating insertion of UvrB beta-hairpin between the DNA strands. Then UvrB probes one DNA strand for the presence of a lesion. If a lesion is found the UvrA subunits dissociate and the UvrB-DNA preincision complex is formed. This complex is subsequently bound by UvrC and the second UvrB is released. If no lesion is found, the DNA wraps around the other UvrB subunit that will check the other stand for damage. In Lactobacillus acidophilus (strain ATCC 700396 / NCK56 / N2 / NCFM), this protein is UvrABC system protein B.